The chain runs to 482 residues: F-box/LRR-repeat protein At3g58930 (482 aa).

Residues 1–47 (MDRVSNLPDGVRGHILSFLPAKHIALTSVLSKSWLNLWKLIPILDID) enclose the F-box domain. LRR repeat units follow at residues 122–150 (SYED…KIRN), 175–200 (SDLI…RMAS), 222–248 (GTGC…NYSD), 313–344 (ILYL…GIKS), and 345–370 (EEGR…IIEG).

The polypeptide is F-box/LRR-repeat protein At3g58930 (Arabidopsis thaliana (Mouse-ear cress)).